Reading from the N-terminus, the 360-residue chain is MVLHFSNLARHKTFVLHWYRYTLRNVARQTFSWHLKARVKDITRTTIVKHKSDKSSWSIYILLRDLKALNGFLRNKKTAAAWRLLTLYSKKPLRSGASSPSVALEHSPPLQDPETVRNSHIIHSYIVERQQKNLLPLEIPAEYKTLLLLPLALHDHALKRLHLIESKLVRGPPKVSVNYTSAGKARIWFLRTAVNKNQRQSKALGQIIRREKRKNQKNIDYWEKCRVNGIWAWHEAAWEHLMETNTMLTESPAKYFDNERSRKRAASDGTSVKAVAEWLDPVFSSLDMLQAQSAEQAAYFEQYKHNTVLQGLQQFFARKSDKMYQNRKKRFESLLENDLPFVTPYFSQQNLATVMKSHKF.

The disordered stretch occupies residues 93–112 (LRSGASSPSVALEHSPPLQD).

Belongs to the RRG1 family.

Its subcellular location is the mitochondrion. In terms of biological role, essential for respiratory growth and required for mitochondrial protein synthesis. Required for vacuolar acidification. In Lachancea thermotolerans (strain ATCC 56472 / CBS 6340 / NRRL Y-8284) (Yeast), this protein is Required for respiratory growth protein 1, mitochondrial (RRG1).